Here is a 217-residue protein sequence, read N- to C-terminus: 3,4-dihydroxy-2-butanone 4-phosphate synthase (217 aa).

D-ribulose 5-phosphate-binding positions include 37–38, D42, 150–154, and E174; these read RE and RGGHT. E38 is a Mg(2+) binding site. H153 provides a ligand contact to Mg(2+).

The protein belongs to the DHBP synthase family. As to quaternary structure, homodimer. It depends on Mg(2+) as a cofactor. Mn(2+) serves as cofactor.

It carries out the reaction D-ribulose 5-phosphate = (2S)-2-hydroxy-3-oxobutyl phosphate + formate + H(+). Its pathway is cofactor biosynthesis; riboflavin biosynthesis; 2-hydroxy-3-oxobutyl phosphate from D-ribulose 5-phosphate: step 1/1. Its function is as follows. Catalyzes the conversion of D-ribulose 5-phosphate to formate and 3,4-dihydroxy-2-butanone 4-phosphate. The polypeptide is 3,4-dihydroxy-2-butanone 4-phosphate synthase (Pectobacterium carotovorum subsp. carotovorum (strain PC1)).